The sequence spans 369 residues: Aminomethyltransferase (369 aa).

Belongs to the GcvT family. In terms of assembly, the glycine cleavage system is composed of four proteins: P, T, L and H.

It catalyses the reaction N(6)-[(R)-S(8)-aminomethyldihydrolipoyl]-L-lysyl-[protein] + (6S)-5,6,7,8-tetrahydrofolate = N(6)-[(R)-dihydrolipoyl]-L-lysyl-[protein] + (6R)-5,10-methylene-5,6,7,8-tetrahydrofolate + NH4(+). The glycine cleavage system catalyzes the degradation of glycine. The chain is Aminomethyltransferase from Xanthomonas axonopodis pv. citri (strain 306).